A 339-amino-acid chain; its full sequence is Tetraacyldisaccharide 4'-kinase (339 aa).

An ATP-binding site is contributed by 44-51; sequence TVGGTGKT.

Belongs to the LpxK family.

The enzyme catalyses a lipid A disaccharide + ATP = a lipid IVA + ADP + H(+). It participates in glycolipid biosynthesis; lipid IV(A) biosynthesis; lipid IV(A) from (3R)-3-hydroxytetradecanoyl-[acyl-carrier-protein] and UDP-N-acetyl-alpha-D-glucosamine: step 6/6. Transfers the gamma-phosphate of ATP to the 4'-position of a tetraacyldisaccharide 1-phosphate intermediate (termed DS-1-P) to form tetraacyldisaccharide 1,4'-bis-phosphate (lipid IVA). The protein is Tetraacyldisaccharide 4'-kinase of Bdellovibrio bacteriovorus (strain ATCC 15356 / DSM 50701 / NCIMB 9529 / HD100).